The sequence spans 563 residues: Germacrene C/D synthase (563 aa).

A disordered region spans residues 1–22 (MESCLSVSSAPPPKKNIQEPVR). Mg(2+) contacts are provided by Asp315, Asp319, and Glu468. A DDXXD motif motif is present at residues 315–319 (DDTYD).

This sequence belongs to the terpene synthase family. Mg(2+) is required as a cofactor. Predominantly expressed in root.

It carries out the reaction (2E,6E)-farnesyl diphosphate = germacrene C + diphosphate. It catalyses the reaction (2E,6E)-farnesyl diphosphate = (-)-germacrene D + diphosphate. Mediates formation of germacrene C and germacrene D using farnesyl diphosphate as substrate. Can also catalyze formation of trace of germacrene B. This Valeriana officinalis (Valerian) protein is Germacrene C/D synthase (TPS1).